We begin with the raw amino-acid sequence, 212 residues long: Uridine kinase (212 aa).

13–20 is an ATP binding site; it reads GASASGKS.

Belongs to the uridine kinase family.

It localises to the cytoplasm. It carries out the reaction uridine + ATP = UMP + ADP + H(+). The catalysed reaction is cytidine + ATP = CMP + ADP + H(+). It participates in pyrimidine metabolism; CTP biosynthesis via salvage pathway; CTP from cytidine: step 1/3. Its pathway is pyrimidine metabolism; UMP biosynthesis via salvage pathway; UMP from uridine: step 1/1. The protein is Uridine kinase of Shewanella putrefaciens (strain CN-32 / ATCC BAA-453).